A 173-amino-acid polypeptide reads, in one-letter code: dCTP deaminase, dUMP-forming (173 aa).

Residues 93-98 (RSSIGR), Asp-111, 119-121 (TLE), Gln-138, and Tyr-151 each bind dCTP. The Proton donor/acceptor role is filled by Glu-121.

It belongs to the dCTP deaminase family. As to quaternary structure, homotrimer.

The catalysed reaction is dCTP + 2 H2O = dUMP + NH4(+) + diphosphate. It participates in pyrimidine metabolism; dUMP biosynthesis; dUMP from dCTP: step 1/1. In terms of biological role, bifunctional enzyme that catalyzes both the deamination of dCTP to dUTP and the hydrolysis of dUTP to dUMP without releasing the toxic dUTP intermediate. The protein is dCTP deaminase, dUMP-forming of Clostridium acetobutylicum (strain ATCC 824 / DSM 792 / JCM 1419 / IAM 19013 / LMG 5710 / NBRC 13948 / NRRL B-527 / VKM B-1787 / 2291 / W).